The sequence spans 652 residues: Inactive leucine-rich repeat receptor-like serine/threonine-protein kinase At1g60630 (652 aa).

A signal peptide spans 1 to 23; it reads MISSSSCMFFLVFAFFLISPVRS. The Extracellular segment spans residues 24 to 256; that stretch reads SDVEALLSLK…SRTKLIGIIS (233 aa). 6 LRR repeats span residues 64–84, 85–108, 109–132, 134–156, 158–178, and 179–203; these read SKLVLENLNLSGSLNGKSLNQ, LDQLRVLSFKGNSLSGSIPNLSGL, VNLKSLYLNDNNFSGEFPESLTSL, RLKTVVLSRNRFSGKIPSSLLRL, RLYTFYVQDNLFSGSIPPLNQ, and ATLRFFNVSNNQLSGHIPPTQALNR. N-linked (GlcNAc...) asparagine glycosylation is found at asparagine 72, asparagine 104, and asparagine 120. 3 N-linked (GlcNAc...) asparagine glycosylation sites follow: asparagine 185, asparagine 205, and asparagine 225. A helical membrane pass occupies residues 257-277; the sequence is GSICGGILILLLTFLLICLLW. Topologically, residues 278 to 652 are cytoplasmic; it reads RRKRSKSKRE…SLPREDHMSI (375 aa). Residues 286-321 form a disordered region; the sequence is REERRSKRVAESKEAKTAETEEGTSDQKNKRFSWEK. Residues 350–624 enclose the Protein kinase domain; that stretch reads KASAETLGRG…VKDARAEAAL (275 aa). Residue serine 352 is modified to Phosphoserine. ATP contacts are provided by residues 356–364 and lysine 378; that span reads LGRGTLGST. Phosphoserine is present on residues serine 430 and serine 433. At threonine 509 the chain carries Phosphothreonine. Residues 630 to 652 form a disordered region; it reads SDHSPGRWSDTIQSLPREDHMSI.

The protein belongs to the protein kinase superfamily. Ser/Thr protein kinase family.

The protein resides in the cell membrane. The chain is Inactive leucine-rich repeat receptor-like serine/threonine-protein kinase At1g60630 from Arabidopsis thaliana (Mouse-ear cress).